The chain runs to 265 residues: Early E4 31 kDa protein (265 aa).

Belongs to the adenoviridae E4 30 to 34 kDa protein family. Interacts with E1B-55k.

It localises to the host nucleus. Its subcellular location is the host cytoplasm. Its function is as follows. Plays a major role to prevent cellular inhibition of viral genome replication by nuclear bodies. Assembles an SCF-like E3 ubiquitin ligase complex based on the cellular proteins ELOB, ELOC, CUL5 and RBX1, in cooperation with viral E1B-55K. This viral RING-type ligase ubiquitinates cellular substrates prior to proteasomal degradation: p53/TP53, LIG4, MRE11-RAD50-NBS1 (MRN) complex, ITGA3, DAXX and BLM. The chain is Early E4 31 kDa protein from Canis lupus familiaris (Dog).